The sequence spans 312 residues: Glyoxylate/hydroxypyruvate reductase A (312 aa).

The active site involves Arg-227. Residue His-275 is the Proton donor of the active site.

The protein belongs to the D-isomer specific 2-hydroxyacid dehydrogenase family. GhrA subfamily.

Its subcellular location is the cytoplasm. The catalysed reaction is glycolate + NADP(+) = glyoxylate + NADPH + H(+). The enzyme catalyses (R)-glycerate + NAD(+) = 3-hydroxypyruvate + NADH + H(+). It carries out the reaction (R)-glycerate + NADP(+) = 3-hydroxypyruvate + NADPH + H(+). In terms of biological role, catalyzes the NADPH-dependent reduction of glyoxylate and hydroxypyruvate into glycolate and glycerate, respectively. This Escherichia coli O17:K52:H18 (strain UMN026 / ExPEC) protein is Glyoxylate/hydroxypyruvate reductase A.